Reading from the N-terminus, the 591-residue chain is Calnexin (591 aa).

The signal sequence occupies residues 1–20 (MEGKWLLCLLLVLGTAAVEA). Residues 21-482 (HDGHDDDAID…QMLEAAEERP (462 aa)) lie on the Lumenal side of the membrane. Ca(2+)-binding residues include Ser75 and Asp118. Lys138 carries the post-translational modification N6-acetyllysine. Cys161 and Cys195 are joined by a disulfide. Residues Tyr165, Lys167, Tyr186, and Asp193 each coordinate an alpha-D-glucoside. The interval 261 to 347 (GNLLNDMTPP…EKPEDWDEDM (87 aa)) is disordered. Over residues 275-320 (REIEDPEDRKPEDWDERPKIADPDAVKPDDWDEDAPSKIPDEEATK) the composition is skewed to basic and acidic residues. A p domain (Extended arm) region spans residues 277–410 (IEDPEDRKPE…RKIPNPDFFE (134 aa)). 5 repeat units span residues 279-291 (DPED…WDER), 296-308 (DPDA…WDED), 315-327 (DEEA…WLDD), 334-346 (DPDA…WDED), and 349-359 (GEWEAPQIANP). 4 X approximate repeats regions lie at residues 279–346 (DPED…WDED) and 349–406 (GEWE…IPNP). Residues 324 to 347 (WLDDEPEYIPDPDAEKPEDWDEDM) are compositionally biased toward acidic residues. Positions 327-360 (DEPEYIPDPDAEKPEDWDEDMDGEWEAPQIANPK) are interaction with PPIB. Cys361 and Cys367 are oxidised to a cystine. Tandem repeats lie at residues 368–378 (GVWQRPMIDNP), 382–392 (GKWKPPMIDNP), and 396–406 (GIWKPRKIPNP). An an alpha-D-glucoside-binding site is contributed by Glu426. Asp437 provides a ligand contact to Ca(2+). A helical membrane pass occupies residues 483–503 (WLWVVYILTVALPVFLVILFC). S-palmitoyl cysteine attachment occurs at residues Cys503 and Cys504. Over 504 to 591 (CSGKKQSNAM…SPRNRKPRRE (88 aa)) the chain is Cytoplasmic. The tract at residues 504 to 591 (CSGKKQSNAM…SPRNRKPRRE (88 aa)) is sufficient to mediate interaction with SGIP1. Basic and acidic residues predominate over residues 514 to 539 (EYKKTDAPQPDVKDEEGKEEEKNKRD). A disordered region spans residues 514 to 591 (EYKKTDAPQP…SPRNRKPRRE (78 aa)). Position 553 is a phosphoserine (Ser553). Positions 555–568 (AEEDGVTGSQDEED) are enriched in acidic residues. Thr561 bears the Phosphothreonine mark. Phosphoserine; by MAPK3 is present on Ser563. Ser582 bears the Phosphoserine mark.

Belongs to the calreticulin family. As to quaternary structure, interacts with MAPK3/ERK1. Interacts with KCNH2. Associates with ribosomes. The palmitoylated form interacts with the ribosome-translocon complex component SSR1, promoting efficient folding of glycoproteins. Interacts with SERPINA2P/SERPINA2 and with the S and Z variants of SERPINA1. Interacts with SGIP1; involved in negative regulation of endocytosis. Interacts with PPIB. Interacts with SMIM22. Interacts with TMX2. Interacts with TMEM35A/NACHO. Interacts with CHRNA7. Interacts with reticulophagy regulators RETREG2 and RETREG3. Interacts with DNM1L; may form part of a larger protein complex at the ER-mitochondrial interface during mitochondrial fission. Interacts with ADAM7. Phosphorylated at Ser-563 by MAPK3/ERK1. Phosphorylation by MAPK3/ERK1 increases its association with ribosomes. In terms of processing, palmitoylation by DHHC6 leads to the preferential localization to the perinuclear rough ER. It mediates the association of calnexin with the ribosome-translocon complex (RTC) which is required for efficient folding of glycosylated proteins. Post-translationally, ubiquitinated, leading to proteasomal degradation. Probably ubiquitinated by ZNRF4. Expressed in sperm (at protein level).

The protein resides in the endoplasmic reticulum membrane. Its subcellular location is the mitochondrion membrane. The protein localises to the melanosome membrane. Functionally, calcium-binding protein that interacts with newly synthesized monoglucosylated glycoproteins in the endoplasmic reticulum. It may act in assisting protein assembly and/or in the retention within the ER of unassembled protein subunits. It seems to play a major role in the quality control apparatus of the ER by the retention of incorrectly folded proteins. Associated with partial T-cell antigen receptor complexes that escape the ER of immature thymocytes, it may function as a signaling complex regulating thymocyte maturation. Additionally it may play a role in receptor-mediated endocytosis at the synapse. In Mus musculus (Mouse), this protein is Calnexin (Canx).